Here is a 92-residue protein sequence, read N- to C-terminus: Small ribosomal subunit protein uS19 (92 aa).

It belongs to the universal ribosomal protein uS19 family.

Protein S19 forms a complex with S13 that binds strongly to the 16S ribosomal RNA. This Klebsiella pneumoniae (strain 342) protein is Small ribosomal subunit protein uS19.